The primary structure comprises 232 residues: LexA repressor (232 aa).

Residues 1-25 (MSDDSSDSTSGAGSGRGRDSGLTER) form a disordered region. Over residues 16–25 (RGRDSGLTER) the composition is skewed to basic and acidic residues. The segment at residues 46–66 (IREIGDAVGLTSTSSVAHQLR) is a DNA-binding region (H-T-H motif). Active-site for autocatalytic cleavage activity residues include Ser156 and Lys193.

Belongs to the peptidase S24 family. In terms of assembly, homodimer.

It catalyses the reaction Hydrolysis of Ala-|-Gly bond in repressor LexA.. Represses a number of genes involved in the response to DNA damage (SOS response), including recA and lexA. In the presence of single-stranded DNA, RecA interacts with LexA causing an autocatalytic cleavage which disrupts the DNA-binding part of LexA, leading to derepression of the SOS regulon and eventually DNA repair. The chain is LexA repressor from Mycolicibacterium vanbaalenii (strain DSM 7251 / JCM 13017 / BCRC 16820 / KCTC 9966 / NRRL B-24157 / PYR-1) (Mycobacterium vanbaalenii).